The primary structure comprises 96 residues: UPF0125 protein YfjF (96 aa).

This sequence belongs to the UPF0125 (RnfH) family.

The polypeptide is UPF0125 protein YfjF (yfjF) (Escherichia coli O157:H7).